Reading from the N-terminus, the 309-residue chain is Protein FdhE homolog (309 aa).

This sequence belongs to the FdhE family.

It localises to the cytoplasm. Necessary for formate dehydrogenase activity. The chain is Protein FdhE homolog from Pseudomonas aeruginosa (strain ATCC 15692 / DSM 22644 / CIP 104116 / JCM 14847 / LMG 12228 / 1C / PRS 101 / PAO1).